A 478-amino-acid chain; its full sequence is 3-isopropylmalate dehydratase large subunit (478 aa).

The [4Fe-4S] cluster site is built by cysteine 359, cysteine 420, and cysteine 423.

The protein belongs to the aconitase/IPM isomerase family. LeuC type 1 subfamily. Heterodimer of LeuC and LeuD. It depends on [4Fe-4S] cluster as a cofactor.

It catalyses the reaction (2R,3S)-3-isopropylmalate = (2S)-2-isopropylmalate. The protein operates within amino-acid biosynthesis; L-leucine biosynthesis; L-leucine from 3-methyl-2-oxobutanoate: step 2/4. Catalyzes the isomerization between 2-isopropylmalate and 3-isopropylmalate, via the formation of 2-isopropylmaleate. This Psychrobacter sp. (strain PRwf-1) protein is 3-isopropylmalate dehydratase large subunit.